The chain runs to 160 residues: Major strawberry allergen Fra a 1-B (160 aa).

It belongs to the BetVI family. In terms of assembly, monomer.

The sequence is that of Major strawberry allergen Fra a 1-B from Fragaria ananassa (Strawberry).